We begin with the raw amino-acid sequence, 275 residues long: Sulfur carrier protein FdhD (275 aa).

Residue C121 is the Cysteine persulfide intermediate of the active site. Mo-bis(molybdopterin guanine dinucleotide) is bound at residue 258 to 263; the sequence is FSKPGR.

This sequence belongs to the FdhD family.

It is found in the cytoplasm. In terms of biological role, required for formate dehydrogenase (FDH) activity. Acts as a sulfur carrier protein that transfers sulfur from IscS to the molybdenum cofactor prior to its insertion into FDH. The sequence is that of Sulfur carrier protein FdhD from Yersinia enterocolitica serotype O:8 / biotype 1B (strain NCTC 13174 / 8081).